We begin with the raw amino-acid sequence, 673 residues long: uncharacterized protein (673 aa).

The N-terminal stretch at 1-24 (MKIHNIIKIIIVVCLEGFALTSFA) is a signal peptide. The next 6 membrane-spanning stretches (helical) occupy residues 224–244 (NAIGAALILYVMFFAFNMVLN), 253–273 (IALFVIKLLFVTYFSIGLGPL), 410–430 (IILISGLVFAVIFLSILLYFI), 436–456 (CMITIYVMTYVSPIFIPMMLF), 469–489 (VSLSCALQPAVVAGFIALLIT), and 562–582 (VVSILAELLCVLVFSVIFYYF). Residues 624–673 (AQATQGKPPSSGDMPGDGGSKRSEGQKGDDSFISSGGNSSGDSLSSSGGK) form a disordered region. Basic and acidic residues predominate over residues 642–653 (GSKRSEGQKGDD). The segment covering 654 to 673 (SFISSGGNSSGDSLSSSGGK) has biased composition (low complexity).

It belongs to the TrbL/VirB6 family.

It is found in the cell membrane. This is an uncharacterized protein from Rickettsia bellii (strain RML369-C).